The chain runs to 131 residues: Norrin (131 aa).

Positions 1–24 (MRNHVLAASISMLSLLAIMGDTDS) are cleaved as a signal peptide. 4 disulfide bridges follow: cysteine 37–cysteine 94, cysteine 53–cysteine 108, cysteine 63–cysteine 124, and cysteine 67–cysteine 126. The CTCK domain maps to 37–130 (CMRHHYVDSI…ILSCHCEECS (94 aa)).

As to quaternary structure, homodimer; disulfide-linked. Component of a complex, at least composed of TSPAN12, FZD4, LRP5/6 and norrin (NDP). Binds FZD4 with high affinity. Interacts with LRP6 (via Beta-propellers 1 and 2). In terms of tissue distribution, expressed in the outer nuclear, inner nuclear and ganglion cell layers of the retina.

It is found in the secreted. Activates the canonical Wnt signaling pathway through FZD4 and LRP5 coreceptor. Plays a central role in retinal vascularization by acting as a ligand for FZD4 that signals via stabilizing beta-catenin (CTNNB1) and activating LEF/TCF-mediated transcriptional programs. Acts in concert with TSPAN12 to activate FZD4 independently of the Wnt-dependent activation of FZD4, suggesting the existence of a Wnt-independent signaling that also promote accumulation the beta-catenin (CTNNB1). May be involved in a pathway that regulates neural cell differentiation and proliferation. Possible role in neuroectodermal cell-cell interaction. This Mus musculus (Mouse) protein is Norrin (Ndp).